We begin with the raw amino-acid sequence, 398 residues long: S-adenosylmethionine synthase (398 aa).

H17 serves as a coordination point for ATP. Mg(2+) is bound at residue D19. E45 lines the K(+) pocket. L-methionine-binding residues include E58 and Q101. The interval 101–111 (QSPDIAQGVDK) is flexible loop. Residues 176–178 (DGK), 243–244 (RF), D252, 258–259 (RK), and K279 contribute to the ATP site. D252 serves as a coordination point for L-methionine. L-methionine is bound at residue K283.

The protein belongs to the AdoMet synthase family. In terms of assembly, homotetramer; dimer of dimers. Requires Mg(2+) as cofactor. K(+) serves as cofactor.

The protein resides in the cytoplasm. The catalysed reaction is L-methionine + ATP + H2O = S-adenosyl-L-methionine + phosphate + diphosphate. The protein operates within amino-acid biosynthesis; S-adenosyl-L-methionine biosynthesis; S-adenosyl-L-methionine from L-methionine: step 1/1. Catalyzes the formation of S-adenosylmethionine (AdoMet) from methionine and ATP. The overall synthetic reaction is composed of two sequential steps, AdoMet formation and the subsequent tripolyphosphate hydrolysis which occurs prior to release of AdoMet from the enzyme. This chain is S-adenosylmethionine synthase, found in Staphylococcus aureus (strain Mu3 / ATCC 700698).